Reading from the N-terminus, the 158-residue chain is Endoribonuclease YbeY (158 aa).

Histidine 118, histidine 122, and histidine 128 together coordinate Zn(2+).

This sequence belongs to the endoribonuclease YbeY family. It depends on Zn(2+) as a cofactor.

It is found in the cytoplasm. Single strand-specific metallo-endoribonuclease involved in late-stage 70S ribosome quality control and in maturation of the 3' terminus of the 16S rRNA. The polypeptide is Endoribonuclease YbeY (Bartonella quintana (strain Toulouse) (Rochalimaea quintana)).